The sequence spans 283 residues: Phosphatidylglycerol--prolipoprotein diacylglyceryl transferase (283 aa).

The next 4 helical transmembrane spans lie at 20-40 (IGGFALRWYGFLIASAVIIGL), 60-80 (LVIWLVVAAIPSARLYYVAFE), 94-114 (IWQGGIAIHGALIGGTIAILV), and 121-141 (LSFWNLLDVLTPAVILGQAIG). R142 provides a ligand contact to a 1,2-diacyl-sn-glycero-3-phospho-(1'-sn-glycerol). Helical transmembrane passes span 183–203 (FLYESVWNLGIFAILIALFFY), 214–234 (GTITCVYLIGYSLGRVWIEGL), and 248–268 (QVVSITLVLLGTAGIVWLYLL).

It belongs to the Lgt family.

Its subcellular location is the cell inner membrane. The catalysed reaction is L-cysteinyl-[prolipoprotein] + a 1,2-diacyl-sn-glycero-3-phospho-(1'-sn-glycerol) = an S-1,2-diacyl-sn-glyceryl-L-cysteinyl-[prolipoprotein] + sn-glycerol 1-phosphate + H(+). It participates in protein modification; lipoprotein biosynthesis (diacylglyceryl transfer). In terms of biological role, catalyzes the transfer of the diacylglyceryl group from phosphatidylglycerol to the sulfhydryl group of the N-terminal cysteine of a prolipoprotein, the first step in the formation of mature lipoproteins. In Synechocystis sp. (strain ATCC 27184 / PCC 6803 / Kazusa), this protein is Phosphatidylglycerol--prolipoprotein diacylglyceryl transferase.